The primary structure comprises 540 residues: Exopolysaccharide phosphotransferase SCO6022 (540 aa).

Belongs to the stealth family.

The sequence is that of Exopolysaccharide phosphotransferase SCO6022 from Streptomyces coelicolor (strain ATCC BAA-471 / A3(2) / M145).